Here is a 600-residue protein sequence, read N- to C-terminus: ATP-dependent lipid A-core flippase (600 aa).

A run of 4 helical transmembrane segments spans residues 26 to 46 (VGIF…QPML), 82 to 102 (LLIV…NYFL), 167 to 187 (VFLF…MLAI), and 266 to 286 (PMLQ…VLFL). One can recognise an ABC transmembrane type-1 domain in the interval 30 to 321 (LLSIIGFVIF…LSEVSSTIQK (292 aa)). The 237-residue stretch at 353–589 (LEVKNLSFFY…NGYYARLHAM (237 aa)) folds into the ABC transporter domain. 387–394 (GRSGSGKS) lines the ATP pocket.

This sequence belongs to the ABC transporter superfamily. Lipid exporter (TC 3.A.1.106) family. Homodimer.

It localises to the cell inner membrane. The enzyme catalyses ATP + H2O + lipid A-core oligosaccharideSide 1 = ADP + phosphate + lipid A-core oligosaccharideSide 2.. In terms of biological role, involved in lipopolysaccharide (LPS) biosynthesis. Translocates lipid A-core from the inner to the outer leaflet of the inner membrane. Transmembrane domains (TMD) form a pore in the inner membrane and the ATP-binding domain (NBD) is responsible for energy generation. The protein is ATP-dependent lipid A-core flippase of Pseudomonas syringae pv. syringae (strain B728a).